Consider the following 881-residue polypeptide: Alanine--tRNA ligase (881 aa).

Positions 568, 572, 670, and 674 each coordinate Zn(2+).

It belongs to the class-II aminoacyl-tRNA synthetase family. Zn(2+) serves as cofactor.

The protein resides in the cytoplasm. The enzyme catalyses tRNA(Ala) + L-alanine + ATP = L-alanyl-tRNA(Ala) + AMP + diphosphate. Catalyzes the attachment of alanine to tRNA(Ala) in a two-step reaction: alanine is first activated by ATP to form Ala-AMP and then transferred to the acceptor end of tRNA(Ala). Also edits incorrectly charged Ser-tRNA(Ala) and Gly-tRNA(Ala) via its editing domain. The chain is Alanine--tRNA ligase from Moorella thermoacetica (strain ATCC 39073 / JCM 9320).